Reading from the N-terminus, the 58-residue chain is Photosystem II reaction center protein K (58 aa).

Positions 1–21 (MLAIFNIYLDNAFHLNGIILA) are excised as a propeptide. The chain crosses the membrane as a helical span at residues 29–49 (IFDPIVDVMPIIPVFFFLLAF).

It belongs to the PsbK family. PSII is composed of 1 copy each of membrane proteins PsbA, PsbB, PsbC, PsbD, PsbE, PsbF, PsbH, PsbI, PsbJ, PsbK, PsbL, PsbM, PsbT, PsbX, PsbY, PsbZ, Psb30/Ycf12, at least 3 peripheral proteins of the oxygen-evolving complex and a large number of cofactors. It forms dimeric complexes.

The protein localises to the plastid. The protein resides in the chloroplast thylakoid membrane. Its function is as follows. One of the components of the core complex of photosystem II (PSII). PSII is a light-driven water:plastoquinone oxidoreductase that uses light energy to abstract electrons from H(2)O, generating O(2) and a proton gradient subsequently used for ATP formation. It consists of a core antenna complex that captures photons, and an electron transfer chain that converts photonic excitation into a charge separation. This chain is Photosystem II reaction center protein K, found in Physcomitrium patens (Spreading-leaved earth moss).